The sequence spans 700 residues: Lutropin-choriogonadotropic hormone receptor (700 aa).

An N-terminal signal peptide occupies residues 1 to 26 (MGRRVPALRQLLVLAMLVLKQSQLHS). At 27-362 (PELSGSRCPE…AFNPCEDIMG (336 aa)) the chain is on the extracellular side. The stretch at 52 to 75 (RAGLARLSLTYLPVKVIPSQAFRG) is one LRR 1 repeat. The N-linked (GlcNAc...) asparagine glycan is linked to N103. 3 LRR repeats span residues 126-150 (LPRL…KISS), 176-200 (MNNE…AFNG), and 225-248 (ATGP…GLES). N178 and N199 each carry an N-linked (GlcNAc...) asparagine glycan. Residues N295, N303, and N317 are each glycosylated (N-linked (GlcNAc...) asparagine). Y335 carries the sulfotyrosine modification. A helical membrane pass occupies residues 363–390 (YAFLRVLIWLINILAIFGNLTVLFVLLT). Residues 391–399 (SRYKLTVPR) lie on the Cytoplasmic side of the membrane. The chain crosses the membrane as a helical span at residues 400–422 (FLMCNLSFADFCMGLYLLLIASV). Topologically, residues 423–443 (DSQTKGQYYNHAIDWQTGSGC) are extracellular. Residues C443 and C518 are joined by a disulfide bond. A helical membrane pass occupies residues 444–466 (SAAGFFTVFASELSVYTLTVITL). Residues 467 to 486 (ERWHTITYAVQLDQKLRLRH) are Cytoplasmic-facing. A helical transmembrane segment spans residues 487–509 (AIPIMLGGWIFSTLMATLPLVGV). At 510–529 (SSYMKVSICLPMDVESTLSQ) the chain is on the extracellular side. A helical transmembrane segment spans residues 530-551 (VYILSILLLNAVAFVVICACYV). Topologically, residues 552 to 574 (RIYFAVQNPELTAPNKDTKIAKK) are cytoplasmic. The helical transmembrane segment at 575–598 (MAILIFTDFTCMAPISFFAISAAF) threads the bilayer. Over 599–609 (KVPLITVTNSK) the chain is Extracellular. A helical membrane pass occupies residues 610–631 (VLLVLFYPVNSCANPFLYAVFT). Over 632–700 (KAFQRDFFLL…QPTPPRVLIQ (69 aa)) the chain is Cytoplasmic. 2 S-palmitoyl cysteine lipidation sites follow: C647 and C648.

It belongs to the G-protein coupled receptor 1 family. FSH/LSH/TSH subfamily. Sulfated.

Its subcellular location is the cell membrane. Receptor for lutropin-choriogonadotropic hormone. The activity of this receptor is mediated by G proteins which activate adenylate cyclase. The chain is Lutropin-choriogonadotropic hormone receptor (Lhcgr) from Mus musculus (Mouse).